A 376-amino-acid polypeptide reads, in one-letter code: Crh-like protein 4 (376 aa).

The first 21 residues, 1-21, serve as a signal peptide directing secretion; that stretch reads MFPKIFLTAATALLSAKSTFA. One can recognise a GH16 domain in the interval 22–229; sequence QTYSSCNPLF…WARGPTDYSN (208 aa). Cysteines 27 and 35 form a disulfide. The active-site Nucleophile is glutamate 119. The active-site Proton donor is the glutamate 123. The chitin site is built by glutamate 123, lysine 202, tryptophan 206, and threonine 217. Serine 346 carries the GPI-anchor amidated serine lipid modification. The propeptide at 347 to 376 is removed in mature form; sequence ASPINISRINPLLLCGPFTFFFFAAIRRWP. Residue asparagine 351 is glycosylated (N-linked (GlcNAc...) asparagine).

The protein belongs to the glycosyl hydrolase 16 family. CRH1 subfamily.

The protein localises to the cell membrane. It carries out the reaction Random endo-hydrolysis of N-acetyl-beta-D-glucosaminide (1-&gt;4)-beta-linkages in chitin and chitodextrins.. In terms of biological role, dual chitinase/transglycosylase that plays a role in cell wall architecture. Chitinase and transglycosylase activities are coupled. Required for the polysaccharide cross-linking at the septa and the cell wall. More specifically, transfers chitin to 1,6-beta-glucan in the cell wall. This chain is Crh-like protein 4, found in Botryotinia fuckeliana (strain B05.10) (Noble rot fungus).